We begin with the raw amino-acid sequence, 159 residues long: Phosphopantetheine adenylyltransferase (159 aa).

A substrate-binding site is contributed by Thr10. Residues 10-11 (TF) and His18 each bind ATP. Residues Lys42, Met74, and Arg88 each contribute to the substrate site. ATP contacts are provided by residues 89–91 (GLR), Glu99, and 124–130 (WSFISSS).

The protein belongs to the bacterial CoaD family. In terms of assembly, homohexamer. The cofactor is Mg(2+).

The protein localises to the cytoplasm. It carries out the reaction (R)-4'-phosphopantetheine + ATP + H(+) = 3'-dephospho-CoA + diphosphate. Its pathway is cofactor biosynthesis; coenzyme A biosynthesis; CoA from (R)-pantothenate: step 4/5. Functionally, reversibly transfers an adenylyl group from ATP to 4'-phosphopantetheine, yielding dephospho-CoA (dPCoA) and pyrophosphate. In Escherichia coli O7:K1 (strain IAI39 / ExPEC), this protein is Phosphopantetheine adenylyltransferase.